A 147-amino-acid polypeptide reads, in one-letter code: 3-dehydroquinate dehydratase (147 aa).

Residue Tyr-22 is the Proton acceptor of the active site. Substrate contacts are provided by Asn-76, His-82, and Asp-89. His-102 serves as the catalytic Proton donor. Substrate is bound by residues 103 to 104 (IS) and Arg-113.

Belongs to the type-II 3-dehydroquinase family. In terms of assembly, homododecamer.

It catalyses the reaction 3-dehydroquinate = 3-dehydroshikimate + H2O. It functions in the pathway metabolic intermediate biosynthesis; chorismate biosynthesis; chorismate from D-erythrose 4-phosphate and phosphoenolpyruvate: step 3/7. Its function is as follows. Catalyzes a trans-dehydration via an enolate intermediate. The chain is 3-dehydroquinate dehydratase from Fusobacterium nucleatum subsp. nucleatum (strain ATCC 25586 / DSM 15643 / BCRC 10681 / CIP 101130 / JCM 8532 / KCTC 2640 / LMG 13131 / VPI 4355).